Here is a 413-residue protein sequence, read N- to C-terminus: S-adenosylmethionine synthase (413 aa).

Histidine 15 is a binding site for ATP. Aspartate 17 is a binding site for Mg(2+). Residue glutamate 43 participates in K(+) binding. Positions 56 and 100 each coordinate L-methionine. Positions glutamine 100 to aspartate 110 are flexible loop. Residues aspartate 171–lysine 173, lysine 248–phenylalanine 249, aspartate 257, arginine 263–lysine 264, alanine 280, and lysine 284 contribute to the ATP site. Residue aspartate 257 coordinates L-methionine. Lysine 288 provides a ligand contact to L-methionine.

The protein belongs to the AdoMet synthase family. In terms of assembly, homotetramer; dimer of dimers. Mg(2+) serves as cofactor. Requires K(+) as cofactor.

The protein localises to the cytoplasm. The enzyme catalyses L-methionine + ATP + H2O = S-adenosyl-L-methionine + phosphate + diphosphate. It functions in the pathway amino-acid biosynthesis; S-adenosyl-L-methionine biosynthesis; S-adenosyl-L-methionine from L-methionine: step 1/1. Functionally, catalyzes the formation of S-adenosylmethionine (AdoMet) from methionine and ATP. The overall synthetic reaction is composed of two sequential steps, AdoMet formation and the subsequent tripolyphosphate hydrolysis which occurs prior to release of AdoMet from the enzyme. In Prochlorococcus marinus (strain MIT 9301), this protein is S-adenosylmethionine synthase.